Reading from the N-terminus, the 271-residue chain is Acyl-[acyl-carrier-protein]--UDP-N-acetylglucosamine O-acyltransferase (271 aa).

It belongs to the transferase hexapeptide repeat family. LpxA subfamily. Homotrimer.

It localises to the cytoplasm. It catalyses the reaction a (3R)-hydroxyacyl-[ACP] + UDP-N-acetyl-alpha-D-glucosamine = a UDP-3-O-[(3R)-3-hydroxyacyl]-N-acetyl-alpha-D-glucosamine + holo-[ACP]. Its pathway is glycolipid biosynthesis; lipid IV(A) biosynthesis; lipid IV(A) from (3R)-3-hydroxytetradecanoyl-[acyl-carrier-protein] and UDP-N-acetyl-alpha-D-glucosamine: step 1/6. In terms of biological role, involved in the biosynthesis of lipid A, a phosphorylated glycolipid that anchors the lipopolysaccharide to the outer membrane of the cell. The polypeptide is Acyl-[acyl-carrier-protein]--UDP-N-acetylglucosamine O-acyltransferase (Rhizobium rhizogenes (strain K84 / ATCC BAA-868) (Agrobacterium radiobacter)).